Consider the following 201-residue polypeptide: Natural cytotoxicity triggering receptor 3 (201 aa).

Positions 1-18 are cleaved as a signal peptide; that stretch reads MAWMLLLILIMVYPGSCA. Positions 19-126 constitute an Ig-like domain; that stretch reads LWVSQPPEIR…VGTGNGTRLV (108 aa). Residues 19–133 are Extracellular-facing; that stretch reads LWVSQPPEIR…RLVVEKEYPQ (115 aa). An intrachain disulfide couples Cys-39 to Cys-108. Residues Asn-42 and Asn-121 are each glycosylated (N-linked (GlcNAc...) asparagine). The chain crosses the membrane as a helical span at residues 134–154; that stretch reads LGAGTVLLLRAGFYAVSFLSV. At 155 to 201 the chain is on the cytoplasmic side; the sequence is AMGSTLYYQGKCLTWKGPRRQLPAVVPGPLPPPCGSSAHLLPPVPGG.

It belongs to the natural cytotoxicity receptor (NCR) family. In terms of assembly, homodimer in the unliganted form. Interacts with CD3Z. Interacts with and is activated by binding to NCR3LG1. Interacts with and is activated by binding to BAG6. Interacts with and is inhibited by binding to LGALS3.

It localises to the cell membrane. Its function is as follows. Cell membrane receptor of natural killer/NK cells that is activated by binding of extracellular ligands including BAG6 and NCR3LG1. Stimulates NK cells cytotoxicity toward neighboring cells producing these ligands. It controls, for instance, NK cells cytotoxicity against tumor cells. Engagement of NCR3 by BAG6 also promotes myeloid dendritic cells (DC) maturation, both through killing DCs that did not acquire a mature phenotype, and inducing the release by NK cells of TNFA and IFNG that promote DC maturation. This is Natural cytotoxicity triggering receptor 3 (NCR3) from Macaca mulatta (Rhesus macaque).